Consider the following 994-residue polypeptide: Alanine--tRNA ligase, chloroplastic/mitochondrial (994 aa).

The disordered stretch occupies residues 1 to 29 (MGGLKLPPQTLHGIHGGRRPLTAPSSKPS). Zn(2+) contacts are provided by His-672, His-676, Cys-774, and His-778.

It belongs to the class-II aminoacyl-tRNA synthetase family. Monomer. Zn(2+) serves as cofactor.

It localises to the plastid. It is found in the chloroplast. The protein localises to the mitochondrion. It carries out the reaction tRNA(Ala) + L-alanine + ATP = L-alanyl-tRNA(Ala) + AMP + diphosphate. Catalyzes the attachment of alanine to tRNA(Ala) in a two-step reaction: alanine is first activated by ATP to form Ala-AMP and then transferred to the acceptor end of tRNA(Ala). Also edits incorrectly charged tRNA(Ala) via its editing domain. The protein is Alanine--tRNA ligase, chloroplastic/mitochondrial of Populus trichocarpa (Western balsam poplar).